A 328-amino-acid chain; its full sequence is Malate dehydrogenase (328 aa).

11-17 contributes to the NAD(+) binding site; sequence GAAGQIG. 2 residues coordinate substrate: arginine 94 and arginine 100. NAD(+) contacts are provided by residues asparagine 107, glutamine 114, and 131-133; that span reads VGN. Asparagine 133 and arginine 164 together coordinate substrate. Histidine 189 serves as the catalytic Proton acceptor.

This sequence belongs to the LDH/MDH superfamily. MDH type 2 family.

It carries out the reaction (S)-malate + NAD(+) = oxaloacetate + NADH + H(+). Catalyzes the reversible oxidation of malate to oxaloacetate. The protein is Malate dehydrogenase of Acinetobacter baylyi (strain ATCC 33305 / BD413 / ADP1).